The following is a 78-amino-acid chain: Delta-conotoxin-like S6.8 (78 aa).

The first 22 residues, methionine 1 to alanine 22, serve as a signal peptide directing secretion. The propeptide occupies aspartate 23 to glycine 53. 3 cysteine pairs are disulfide-bonded: cysteine 54–cysteine 69, cysteine 61–cysteine 73, and cysteine 68–cysteine 77.

Belongs to the conotoxin O1 superfamily. In terms of tissue distribution, expressed by the venom duct.

Its subcellular location is the secreted. Delta-conotoxins bind to site 6 of voltage-gated sodium channels (Nav) and inhibit the inactivation process. The protein is Delta-conotoxin-like S6.8 of Conus striatus (Striated cone).